The following is a 427-amino-acid chain: Serine--tRNA ligase (427 aa).

Residue 231–233 (TAE) coordinates L-serine. An ATP-binding site is contributed by 262–264 (RSE). Residue Glu285 participates in L-serine binding. 349-352 (EISS) provides a ligand contact to ATP. Ser385 is a binding site for L-serine.

This sequence belongs to the class-II aminoacyl-tRNA synthetase family. Type-1 seryl-tRNA synthetase subfamily. In terms of assembly, homodimer. The tRNA molecule binds across the dimer.

Its subcellular location is the cytoplasm. The enzyme catalyses tRNA(Ser) + L-serine + ATP = L-seryl-tRNA(Ser) + AMP + diphosphate + H(+). It carries out the reaction tRNA(Sec) + L-serine + ATP = L-seryl-tRNA(Sec) + AMP + diphosphate + H(+). It participates in aminoacyl-tRNA biosynthesis; selenocysteinyl-tRNA(Sec) biosynthesis; L-seryl-tRNA(Sec) from L-serine and tRNA(Sec): step 1/1. In terms of biological role, catalyzes the attachment of serine to tRNA(Ser). Is also able to aminoacylate tRNA(Sec) with serine, to form the misacylated tRNA L-seryl-tRNA(Sec), which will be further converted into selenocysteinyl-tRNA(Sec). This Exiguobacterium sp. (strain ATCC BAA-1283 / AT1b) protein is Serine--tRNA ligase.